Reading from the N-terminus, the 194-residue chain is Holliday junction branch migration complex subunit RuvA (194 aa).

The tract at residues 1–64 (MIGRLRGVLT…DDSAALYGFL (64 aa)) is domain I. The interval 65 to 140 (SESERRLFRH…RAADFNNGIS (76 aa)) is domain II. Residues 140 to 144 (STSGK) form a flexible linker region. A domain III region spans residues 145–194 (LNLDTVSEAALALQQLGYKPAEAARMARDAGTESDDVAIVIKKALQTVLR).

It belongs to the RuvA family. Homotetramer. Forms an RuvA(8)-RuvB(12)-Holliday junction (HJ) complex. HJ DNA is sandwiched between 2 RuvA tetramers; dsDNA enters through RuvA and exits via RuvB. An RuvB hexamer assembles on each DNA strand where it exits the tetramer. Each RuvB hexamer is contacted by two RuvA subunits (via domain III) on 2 adjacent RuvB subunits; this complex drives branch migration. In the full resolvosome a probable DNA-RuvA(4)-RuvB(12)-RuvC(2) complex forms which resolves the HJ.

It is found in the cytoplasm. Functionally, the RuvA-RuvB-RuvC complex processes Holliday junction (HJ) DNA during genetic recombination and DNA repair, while the RuvA-RuvB complex plays an important role in the rescue of blocked DNA replication forks via replication fork reversal (RFR). RuvA specifically binds to HJ cruciform DNA, conferring on it an open structure. The RuvB hexamer acts as an ATP-dependent pump, pulling dsDNA into and through the RuvAB complex. HJ branch migration allows RuvC to scan DNA until it finds its consensus sequence, where it cleaves and resolves the cruciform DNA. This chain is Holliday junction branch migration complex subunit RuvA, found in Xylella fastidiosa (strain M23).